A 790-amino-acid chain; its full sequence is E3 ubiquitin-protein ligase Jade-2 (790 aa).

2 disordered regions span residues 1 to 52 (MEEK…PSEV) and 111 to 130 (GPPAQASPSSTMLGEGSQPD). Phosphoserine occurs at positions 9 and 15. A compositionally biased stretch (low complexity) spans 9-28 (SISSDNSDTTDSHATSTSAS). 2 positions are modified to N6-acetyllysine: K32 and K38. S117 carries the post-translational modification Phosphoserine. The PHD-type 1 zinc finger occupies 199–249 (DVVCDVCRSPEGEDGNEMVFCDKCNVCVHQACYGILKVPTGSWLCRTCALG). Residues 251 to 285 (QPKCLLCPKRGGALKPTRSGTKWVHVSCALWIPEV) form a C2HC pre-PHD-type zinc finger. An N6-acetyllysine modification is found at K298. Residues 309 to 365 (LSCSLCKECTGTCIQCSMPSCVTAFHVTCAFDHGLEMRTILADNDEVKFKSFCQEHS) form a PHD-type 2 zinc finger. Disordered stretches follow at residues 361 to 386 (CQEHSDGGPRNEPTSEPTEPSQAGED) and 578 to 777 (SFMR…PREA). Over residues 372 to 381 (EPTSEPTEPS) the composition is skewed to polar residues. Positions 593 to 606 (KARGRTRLPAKKKP) are enriched in basic residues. Low complexity predominate over residues 684-693 (AASVAADSDV). Residues 737 to 747 (ERPKVSLHFDT) show a composition bias toward basic and acidic residues. Residues 757–767 (EMSDSDVEAED) show a composition bias toward acidic residues.

This sequence belongs to the JADE family. In terms of assembly, component of the HBO1 complex composed at least of ING4 or ING5, MYST2/HBO1, MEAF6, and one of JADE1, JADE2 and JADE3. Interacts (via C-terminus) with KDM1A (via AOD/Tower domain).

The catalysed reaction is S-ubiquitinyl-[E2 ubiquitin-conjugating enzyme]-L-cysteine + [acceptor protein]-L-lysine = [E2 ubiquitin-conjugating enzyme]-L-cysteine + N(6)-ubiquitinyl-[acceptor protein]-L-lysine.. It participates in protein modification; protein ubiquitination. In terms of biological role, scaffold subunit of some HBO1 complexes, which have a histone H4 acetyltransferase activity. Acts as an E3 ubiquitin-protein ligase mediating the ubiquitination and subsequent proteasomal degradation of target protein histone demethylase KDM1A. Also acts as a ubiquitin ligase E3 toward itself. Positive regulator of neurogenesis. The sequence is that of E3 ubiquitin-protein ligase Jade-2 (JADE2) from Homo sapiens (Human).